The following is a 395-amino-acid chain: Enoyl-[acyl-carrier-protein] reductase [NADH] (395 aa).

NAD(+)-binding positions include 48 to 53 (GASTGY), 74 to 75 (FE), 111 to 112 (DA), and 139 to 140 (LA). Y225 is a binding site for substrate. The active-site Proton donor is the Y235. Residues K244 and 273–275 (LVT) contribute to the NAD(+) site.

Belongs to the TER reductase family. In terms of assembly, monomer.

It catalyses the reaction a 2,3-saturated acyl-[ACP] + NAD(+) = a (2E)-enoyl-[ACP] + NADH + H(+). The protein operates within lipid metabolism; fatty acid biosynthesis. In terms of biological role, involved in the final reduction of the elongation cycle of fatty acid synthesis (FAS II). Catalyzes the reduction of a carbon-carbon double bond in an enoyl moiety that is covalently linked to an acyl carrier protein (ACP). The protein is Enoyl-[acyl-carrier-protein] reductase [NADH] of Saccharophagus degradans (strain 2-40 / ATCC 43961 / DSM 17024).